We begin with the raw amino-acid sequence, 130 residues long: ESAT-6 secretion system extracellular protein C (130 aa).

Belongs to the EsxC family.

The protein resides in the secreted. The sequence is that of ESAT-6 secretion system extracellular protein C from Staphylococcus aureus (strain MSSA476).